Consider the following 510-residue polypeptide: Probable mannosyl-oligosaccharide alpha-1,2-mannosidase 1B (510 aa).

Positions 1–21 (MHFSSLSLPLTALSLVTPSLA) are cleaved as a signal peptide. N-linked (GlcNAc...) asparagine glycosylation is found at N35, N95, N182, and N249. C332 and C361 are disulfide-bonded. A glycan (N-linked (GlcNAc...) asparagine) is linked at N366. Residue E375 is the Proton donor of the active site. T501 contributes to the Ca(2+) binding site.

The protein belongs to the glycosyl hydrolase 47 family. Monomer. Requires Ca(2+) as cofactor. Mg(2+) serves as cofactor.

It is found in the cytoplasmic vesicle lumen. The catalysed reaction is N(4)-(alpha-D-Man-(1-&gt;2)-alpha-D-Man-(1-&gt;2)-alpha-D-Man-(1-&gt;3)-[alpha-D-Man-(1-&gt;2)-alpha-D-Man-(1-&gt;3)-[alpha-D-Man-(1-&gt;2)-alpha-D-Man-(1-&gt;6)]-alpha-D-Man-(1-&gt;6)]-beta-D-Man-(1-&gt;4)-beta-D-GlcNAc-(1-&gt;4)-beta-D-GlcNAc)-L-asparaginyl-[protein] (N-glucan mannose isomer 9A1,2,3B1,2,3) + 4 H2O = N(4)-(alpha-D-Man-(1-&gt;3)-[alpha-D-Man-(1-&gt;3)-[alpha-D-Man-(1-&gt;6)]-alpha-D-Man-(1-&gt;6)]-beta-D-Man-(1-&gt;4)-beta-D-GlcNAc-(1-&gt;4)-beta-D-GlcNAc)-L-asparaginyl-[protein] (N-glucan mannose isomer 5A1,2) + 4 beta-D-mannose. It carries out the reaction N(4)-(alpha-D-Man-(1-&gt;2)-alpha-D-Man-(1-&gt;2)-alpha-D-Man-(1-&gt;3)-[alpha-D-Man-(1-&gt;3)-[alpha-D-Man-(1-&gt;2)-alpha-D-Man-(1-&gt;6)]-alpha-D-Man-(1-&gt;6)]-beta-D-Man-(1-&gt;4)-beta-D-GlcNAc-(1-&gt;4)-beta-D-GlcNAc)-L-asparaginyl-[protein] (N-glucan mannose isomer 8A1,2,3B1,3) + 3 H2O = N(4)-(alpha-D-Man-(1-&gt;3)-[alpha-D-Man-(1-&gt;3)-[alpha-D-Man-(1-&gt;6)]-alpha-D-Man-(1-&gt;6)]-beta-D-Man-(1-&gt;4)-beta-D-GlcNAc-(1-&gt;4)-beta-D-GlcNAc)-L-asparaginyl-[protein] (N-glucan mannose isomer 5A1,2) + 3 beta-D-mannose. Its pathway is protein modification; protein glycosylation. Its function is as follows. Involved in the maturation of Asn-linked oligosaccharides. Progressively trims alpha-1,2-linked mannose residues from Man(9)GlcNAc(2) to produce Man(5)GlcNAc(2). This Aspergillus flavus (strain ATCC 200026 / FGSC A1120 / IAM 13836 / NRRL 3357 / JCM 12722 / SRRC 167) protein is Probable mannosyl-oligosaccharide alpha-1,2-mannosidase 1B (mns1B).